The following is a 118-amino-acid chain: Small ribosomal subunit protein uS13 (118 aa).

Residues 94–118 (GLPVRGQRTQTNARTRKGPRRLARK) form a disordered region. Residues 107–118 (RTRKGPRRLARK) show a composition bias toward basic residues.

Belongs to the universal ribosomal protein uS13 family. In terms of assembly, part of the 30S ribosomal subunit. Forms a loose heterodimer with protein S19. Forms two bridges to the 50S subunit in the 70S ribosome.

Functionally, located at the top of the head of the 30S subunit, it contacts several helices of the 16S rRNA. In the 70S ribosome it contacts the 23S rRNA (bridge B1a) and protein L5 of the 50S subunit (bridge B1b), connecting the 2 subunits; these bridges are implicated in subunit movement. Contacts the tRNAs in the A and P-sites. This chain is Small ribosomal subunit protein uS13, found in Nitrosococcus oceani (strain ATCC 19707 / BCRC 17464 / JCM 30415 / NCIMB 11848 / C-107).